The sequence spans 54 residues: Light-harvesting protein B-880 beta chain (54 aa).

Topologically, residues 1 to 20 are cytoplasmic; it reads AEDRSSLSGVSDAEAKEFHA. Residues H19 and H37 each contribute to the a bacteriochlorophyll site. Residues 21–43 form a helical membrane-spanning segment; the sequence is LFVSSFTAFIVIAVLAHVLAWAW. Residues 44–54 are Periplasmic-facing; that stretch reads RPWIPGPKGWA.

This sequence belongs to the antenna complex beta subunit family. The core complex is formed by different alpha and beta chains, binding bacteriochlorophyll molecules, and arranged most probably in tetrameric structures disposed around the reaction center. The non-pigmented gamma chains may constitute additional components.

It localises to the cell inner membrane. In terms of biological role, antenna complexes are light-harvesting systems, which transfer the excitation energy to the reaction centers. This chain is Light-harvesting protein B-880 beta chain, found in Rhodoblastus acidophilus (Rhodopseudomonas acidophila).